A 501-amino-acid polypeptide reads, in one-letter code: Aldehyde dehydrogenase family 2 member C4 (501 aa).

An NAD(+)-binding site is contributed by 245 to 250 (GSTDVG). The active-site Proton acceptor is E268. Catalysis depends on C302, which acts as the Nucleophile.

Belongs to the aldehyde dehydrogenase family. In terms of assembly, homotetramer.

The protein resides in the cytoplasm. It localises to the cytosol. It carries out the reaction an aldehyde + NAD(+) + H2O = a carboxylate + NADH + 2 H(+). Involved in ferulic acid and sinapic acid biosynthesis by oxidation of conyferylaldehyde and sinapaldehyde, respectively. Can oxidize L-lactaldehyde. Possesses activity on acetaldehyde and glycolaldehyde in vitro. In Arabidopsis thaliana (Mouse-ear cress), this protein is Aldehyde dehydrogenase family 2 member C4 (ALDH2C4).